The chain runs to 146 residues: Ribosome maturation factor RimP (146 aa).

It belongs to the RimP family.

It is found in the cytoplasm. Required for maturation of 30S ribosomal subunits. The chain is Ribosome maturation factor RimP from Helicobacter pylori (strain G27).